We begin with the raw amino-acid sequence, 230 residues long: Ribose-5-phosphate isomerase A (230 aa).

Substrate-binding positions include 29-32 (SGST), 86-89 (DGAD), and 99-102 (KGGG). Catalysis depends on Glu108, which acts as the Proton acceptor. Lys126 lines the substrate pocket.

It belongs to the ribose 5-phosphate isomerase family. Homodimer.

It catalyses the reaction aldehydo-D-ribose 5-phosphate = D-ribulose 5-phosphate. The protein operates within carbohydrate degradation; pentose phosphate pathway; D-ribose 5-phosphate from D-ribulose 5-phosphate (non-oxidative stage): step 1/1. Its function is as follows. Catalyzes the reversible conversion of ribose-5-phosphate to ribulose 5-phosphate. This chain is Ribose-5-phosphate isomerase A, found in Desulfatibacillum aliphaticivorans.